The sequence spans 675 residues: Potassium-transporting ATPase ATP-binding subunit 2 (675 aa).

Transmembrane regions (helical) follow at residues 34–54 (IMFV…FPDI), 65–85 (LITI…SEAF), 216–236 (IALF…IVTL), and 245–265 (LILP…TTIG). Asp304 serves as the catalytic 4-aspartylphosphate intermediate. Residues Asp341, Glu345, 372–379 (FTAETRMS), and Lys390 each bind ATP. Positions 513 and 517 each coordinate Mg(2+). The next 3 helical transmembrane spans lie at 569-591 (ALTT…ALMM), 611-631 (AIIS…PIAM), and 644-664 (IFIN…FLGI).

Belongs to the cation transport ATPase (P-type) (TC 3.A.3) family. Type IA subfamily. As to quaternary structure, the system is composed of three essential subunits: KdpA, KdpB and KdpC.

It is found in the cell membrane. It carries out the reaction K(+)(out) + ATP + H2O = K(+)(in) + ADP + phosphate + H(+). Part of the high-affinity ATP-driven potassium transport (or Kdp) system, which catalyzes the hydrolysis of ATP coupled with the electrogenic transport of potassium into the cytoplasm. This subunit is responsible for energy coupling to the transport system and for the release of the potassium ions to the cytoplasm. This Staphylococcus aureus (strain MRSA252) protein is Potassium-transporting ATPase ATP-binding subunit 2.